Reading from the N-terminus, the 444-residue chain is CCA-adding enzyme (444 aa).

Residues Ser57 and Arg60 each contribute to the ATP site. CTP is bound by residues Ser57 and Arg60. 3 residues coordinate Mg(2+): Asp69, Asp71, and Asp124. His147, Lys168, and Tyr177 together coordinate ATP. His147, Lys168, and Tyr177 together coordinate CTP.

The protein belongs to the tRNA nucleotidyltransferase/poly(A) polymerase family. Archaeal CCA-adding enzyme subfamily. In terms of assembly, homodimer. Mg(2+) serves as cofactor.

It carries out the reaction a tRNA precursor + 2 CTP + ATP = a tRNA with a 3' CCA end + 3 diphosphate. The catalysed reaction is a tRNA with a 3' CCA end + 2 CTP + ATP = a tRNA with a 3' CCACCA end + 3 diphosphate. In terms of biological role, catalyzes the addition and repair of the essential 3'-terminal CCA sequence in tRNAs without using a nucleic acid template. Adds these three nucleotides in the order of C, C, and A to the tRNA nucleotide-73, using CTP and ATP as substrates and producing inorganic pyrophosphate. tRNA 3'-terminal CCA addition is required both for tRNA processing and repair. Also involved in tRNA surveillance by mediating tandem CCA addition to generate a CCACCA at the 3' terminus of unstable tRNAs. While stable tRNAs receive only 3'-terminal CCA, unstable tRNAs are marked with CCACCA and rapidly degraded. The protein is CCA-adding enzyme of Methanococcus maripaludis (strain C5 / ATCC BAA-1333).